The chain runs to 222 residues: LHFPL tetraspan subfamily member 3 protein (222 aa).

4 helical membrane-spanning segments follow: residues 22-42 (IGVL…VCFI), 96-116 (FFIG…TLFF), 126-146 (ICAW…MIFP), and 177-197 (ILAI…VVLG).

This sequence belongs to the LHFP family. Brain-specific.

It localises to the membrane. This is LHFPL tetraspan subfamily member 3 protein from Mus musculus (Mouse).